We begin with the raw amino-acid sequence, 416 residues long: Gamma-glutamyl phosphate reductase (416 aa).

It belongs to the gamma-glutamyl phosphate reductase family.

The protein localises to the cytoplasm. The catalysed reaction is L-glutamate 5-semialdehyde + phosphate + NADP(+) = L-glutamyl 5-phosphate + NADPH + H(+). Its pathway is amino-acid biosynthesis; L-proline biosynthesis; L-glutamate 5-semialdehyde from L-glutamate: step 2/2. Catalyzes the NADPH-dependent reduction of L-glutamate 5-phosphate into L-glutamate 5-semialdehyde and phosphate. The product spontaneously undergoes cyclization to form 1-pyrroline-5-carboxylate. The protein is Gamma-glutamyl phosphate reductase of Streptococcus thermophilus (strain ATCC BAA-491 / LMD-9).